Here is a 153-residue protein sequence, read N- to C-terminus: Facilitator of iron transport 2 (153 aa).

The signal sequence occupies residues 1-18; that stretch reads MKFSTIFGATTVMTAVSA. Residues 73-98 are disordered; sequence TEGPDTTSEKSTTKTLTLTNGSGSST. Low complexity predominate over residues 85-98; it reads TKTLTLTNGSGSST. Asparagine 92 carries N-linked (GlcNAc...) asparagine glycosylation. Glycine 130 is lipidated: GPI-anchor amidated glycine. A propeptide spans 131 to 153 (removed in mature form); that stretch reads AAPAAFQGASVGALALGLISYLL.

Post-translationally, the GPI-anchor is attached to the protein in the endoplasmic reticulum and serves to target the protein to the cell surface. There, the glucosamine-inositol phospholipid moiety is cleaved off and the GPI-modified mannoprotein is covalently attached via its lipidless GPI glycan remnant to the 1,6-beta-glucan of the outer cell wall layer.

It localises to the secreted. The protein localises to the cell wall. Its subcellular location is the membrane. Its function is as follows. Involved in the uptake of non-siderophore and siderophore sources of iron. Has a role in the retention of iron in the cell wall and periplasmic space. This Saccharomyces cerevisiae (strain ATCC 204508 / S288c) (Baker's yeast) protein is Facilitator of iron transport 2 (FIT2).